Reading from the N-terminus, the 999-residue chain is MGVAGRNRPGAAWAVLLLLLLLPPLLLLAGAVPPGRGRAAGPQEDVDECAQGLDDCHADALCQNTPTSYKCSCKPGYQGEGRQCEDIDECGNELNGGCVHDCLNIPGNYRCTCFDGFMLAHDGHNCLDVDECLENNGGCQHTCVNVMGSYECCCKEGFFLSDNQHTCIHRSEEGLSCMNKDHGCSHICKEAPRGSVACECRPGFELAKNQRDCILTCNHGNGGCQHSCDDTADGPECSCHPQYKMHTDGRSCLEREDTVLEVTESNTTSVVDGDKRVKRRLLMETCAVNNGGCDRTCKDTSTGVHCSCPVGFTLQLDGKTCKDIDECQTRNGGCDHFCKNIVGSFDCGCKKGFKLLTDEKSCQDVDECSLDRTCDHSCINHPGTFACACNRGYTLYGFTHCGDTNECSINNGGCQQVCVNTVGSYECQCHPGYKLHWNKKDCVEVKGLLPTSVSPRVSLHCGKSGGGDGCFLRCHSGIHLSSDVTTIRTSVTFKLNEGKCSLKNAELFPEGLRPALPEKHSSVKESFRYVNLTCSSGKQVPGAPGRPSTPKEMFITVEFELETNQKEVTASCDLSCIVKRTEKRLRKAIRTLRKAVHREQFHLQLSGMNLDVAKKPPRTSERQAESCGVGQGHAENQCVSCRAGTYYDGARERCILCPNGTFQNEEGQMTCEPCPRPGNSGALKTPEAWNMSECGGLCQPGEYSADGFAPCQLCALGTFQPEAGRTSCFPCGGGLATKHQGATSFQDCETRVQCSPGHFYNTTTHRCIRCPVGTYQPEFGKNNCVSCPGNTTTDFDGSTNITQCKNRRCGGELGDFTGYIESPNYPGNYPANTECTWTINPPPKRRILIVVPEIFLPIEDDCGDYLVMRKTSSSNSVTTYETCQTYERPIAFTSRSKKLWIQFKSNEGNSARGFQVPYVTYDEDYQELIEDIVRDGRLYASENHQEILKDKKLIKALFDVLAHPQNYFKYTAQESREMFPRSFIRLLRSKVSRFLRPYK.

A signal peptide spans 1 to 31 (MGVAGRNRPGAAWAVLLLLLLLPPLLLLAGA). The 41-residue stretch at 45-85 (DVDECAQGLDDCHADALCQNTPTSYKCSCKPGYQGEGRQCE) folds into the EGF-like 1; calcium-binding domain. 6 cysteine pairs are disulfide-bonded: cysteine 49-cysteine 62, cysteine 56-cysteine 71, cysteine 73-cysteine 84, cysteine 90-cysteine 102, cysteine 98-cysteine 111, and cysteine 113-cysteine 126. The EGF-like 2; calcium-binding domain occupies 86–127 (DIDECGNELNGGCVHDCLNIPGNYRCTCFDGFMLAHDGHNCL). The EGF-like 3; calcium-binding domain occupies 128–168 (DVDECLENNGGCQHTCVNVMGSYECCCKEGFFLSDNQHTCI). EGF-like domains follow at residues 177–213 (CMNK…QRDC), 217–252 (CNHG…GRSC), and 286–321 (CAVN…GKTC). One can recognise an EGF-like 7; calcium-binding domain in the interval 323 to 363 (DIDECQTRNGGCDHFCKNIVGSFDCGCKKGFKLLTDEKSCQ). The EGF-like 8; calcium-binding domain maps to 364-402 (DVDECSLDRTCDHSCINHPGTFACACNRGYTLYGFTHCG). 6 disulfides stabilise this stretch: cysteine 368/cysteine 378, cysteine 374/cysteine 387, cysteine 389/cysteine 401, cysteine 407/cysteine 418, cysteine 414/cysteine 427, and cysteine 429/cysteine 442. In terms of domain architecture, EGF-like 9; calcium-binding spans 403 to 443 (DTNECSINNGGCQQVCVNTVGSYECQCHPGYKLHWNKKDCV). An N-linked (GlcNAc...) asparagine glycan is attached at asparagine 659. The cysteines at positions 809 and 835 are disulfide-linked. The 113-residue stretch at 809-921 (CGGELGDFTG…RGFQVPYVTY (113 aa)) folds into the CUB domain. The tract at residues 847–856 (ILIVVPEIFL) is interaction with the cholesterol-anchor of SHH. A disulfide bond links cysteine 862 and cysteine 883.

In terms of assembly, forms homooligomers. Forms heterooligomers with SCUBE1. Forms heterooligomers with SCUBE3. Interacts with SHH via the cholesterol anchor of the dually lipid-modified SHH (ShhNp). Interacts with PTCH1. Interacts with VEGFR2. N-glycosylated. In terms of tissue distribution, expressed in a broad spectrum of adult tissues.

It is found in the secreted. The protein localises to the cell surface. Its function is as follows. Lipid-binding protein required for SHH long-range signaling by binding to the dually lipid-modified SHH (ShhNp) and by promoting ShhNp mobilization, solubilization and release from the cell membrane. Acts by enhancing the proteolytic processing (shedding) of the lipid-modified N- and C- terminal of ShhNp at the cell surface. Synergizes with DISP1 to increase SHH secretion. Probable cell surface coreceptor for VEGFR2 involved in VEGFR2-mediated angiogenesis. This chain is Signal peptide, CUB and EGF-like domain-containing protein 2, found in Homo sapiens (Human).